The following is a 132-amino-acid chain: S-adenosylmethionine decarboxylase proenzyme (132 aa).

Ser-65 functions as the Schiff-base intermediate with substrate; via pyruvic acid in the catalytic mechanism. The residue at position 65 (Ser-65) is a Pyruvic acid (Ser); by autocatalysis. The Proton acceptor; for processing activity role is filled by His-70. Cys-85 (proton donor; for catalytic activity) is an active-site residue.

This sequence belongs to the prokaryotic AdoMetDC family. Type 1 subfamily. Heterotetramer of two alpha and two beta chains arranged as a dimer of alpha/beta heterodimers. Pyruvate serves as cofactor. Is synthesized initially as an inactive proenzyme. Formation of the active enzyme involves a self-maturation process in which the active site pyruvoyl group is generated from an internal serine residue via an autocatalytic post-translational modification. Two non-identical subunits are generated from the proenzyme in this reaction, and the pyruvate is formed at the N-terminus of the alpha chain, which is derived from the carboxyl end of the proenzyme. The post-translation cleavage follows an unusual pathway, termed non-hydrolytic serinolysis, in which the side chain hydroxyl group of the serine supplies its oxygen atom to form the C-terminus of the beta chain, while the remainder of the serine residue undergoes an oxidative deamination to produce ammonia and the pyruvoyl group blocking the N-terminus of the alpha chain.

The catalysed reaction is S-adenosyl-L-methionine + H(+) = S-adenosyl 3-(methylsulfanyl)propylamine + CO2. It functions in the pathway amine and polyamine biosynthesis; S-adenosylmethioninamine biosynthesis; S-adenosylmethioninamine from S-adenosyl-L-methionine: step 1/1. In terms of biological role, catalyzes the decarboxylation of S-adenosylmethionine to S-adenosylmethioninamine (dcAdoMet), the propylamine donor required for the synthesis of the polyamines spermine and spermidine from the diamine putrescine. This chain is S-adenosylmethionine decarboxylase proenzyme, found in Symbiobacterium thermophilum (strain DSM 24528 / JCM 14929 / IAM 14863 / T).